A 352-amino-acid polypeptide reads, in one-letter code: Small ribosomal subunit biogenesis GTPase RsgA (352 aa).

Residues 1–11 (MTKRKLSKGQQ) show a composition bias toward basic residues. The interval 1–35 (MTKRKLSKGQQRRVQENHKKRLQSKEKKNHVELDD) is disordered. The segment covering 13 to 33 (RVQENHKKRLQSKEKKNHVEL) has biased composition (basic and acidic residues). The region spanning 114 to 276 (YYDGIKPIAA…VIDSPGVREF (163 aa)) is the CP-type G domain. Residues 162–165 (NKVD) and 216–224 (GQSGVGKSS) each bind GTP. Zn(2+)-binding residues include Cys-300, Cys-305, His-307, and Cys-313.

Belongs to the TRAFAC class YlqF/YawG GTPase family. RsgA subfamily. Monomer. Associates with 30S ribosomal subunit, binds 16S rRNA. Requires Zn(2+) as cofactor.

It is found in the cytoplasm. Functionally, one of several proteins that assist in the late maturation steps of the functional core of the 30S ribosomal subunit. Helps release RbfA from mature subunits. May play a role in the assembly of ribosomal proteins into the subunit. Circularly permuted GTPase that catalyzes slow GTP hydrolysis, GTPase activity is stimulated by the 30S ribosomal subunit. This chain is Small ribosomal subunit biogenesis GTPase RsgA, found in Proteus mirabilis (strain HI4320).